The following is a 262-amino-acid chain: tRNA pseudouridine synthase A (262 aa).

D51 (nucleophile) is an active-site residue. Y109 contacts substrate.

This sequence belongs to the tRNA pseudouridine synthase TruA family. As to quaternary structure, homodimer.

It carries out the reaction uridine(38/39/40) in tRNA = pseudouridine(38/39/40) in tRNA. Formation of pseudouridine at positions 38, 39 and 40 in the anticodon stem and loop of transfer RNAs. This is tRNA pseudouridine synthase A from Actinobacillus pleuropneumoniae serotype 3 (strain JL03).